The following is a 309-amino-acid chain: Homoserine O-succinyltransferase (309 aa).

The active-site Acyl-thioester intermediate is the Cys-142. Residues Lys-163 and Ser-192 each coordinate substrate. The Proton acceptor role is filled by His-235. Glu-237 is an active-site residue. A substrate-binding site is contributed by Arg-249.

This sequence belongs to the MetA family. In terms of assembly, homodimer.

Its subcellular location is the cytoplasm. The catalysed reaction is L-homoserine + succinyl-CoA = O-succinyl-L-homoserine + CoA. It functions in the pathway amino-acid biosynthesis; L-methionine biosynthesis via de novo pathway; O-succinyl-L-homoserine from L-homoserine: step 1/1. Transfers a succinyl group from succinyl-CoA to L-homoserine, forming succinyl-L-homoserine. This is Homoserine O-succinyltransferase from Salmonella choleraesuis (strain SC-B67).